A 153-amino-acid chain; its full sequence is Prostaglandin E synthase (153 aa).

Over 1–13 the chain is Lumenal; that stretch reads MPPPVLALVSGQA. A helical transmembrane segment spans residues 14–42; the sequence is LPAFLLCSTLLVIKMYVVAVITGQVRLRK. Arg-39 is a binding site for glutathione. Residues 43–61 are Cytoplasmic-facing; that stretch reads KAFANPEDALRHGGLQYCR. A helical transmembrane segment spans residues 62 to 91; it reads SDQDVDRCLRAHRNDMETIYPFLFLGFVYS. 74–78 contacts glutathione; sequence RNDME. Residues 92 to 96 are Lumenal-facing; the sequence is FLGPD. A helical membrane pass occupies residues 97–120; the sequence is PFIAQMHFLVFFLGRMVHTVAYLG. Glutathione contacts are provided by His-114 and Tyr-118. Residues 121 to 124 are Cytoplasmic-facing; the sequence is KLRA. Residues 125 to 153 form a helical membrane-spanning segment; the sequence is PTRSLAYTVAQLPCASMALQIVWEAACHL. Residue 127 to 131 participates in glutathione binding; that stretch reads RSLAY.

Belongs to the MAPEG family. As to quaternary structure, homotrimer. The cofactor is glutathione.

Its subcellular location is the membrane. It localises to the cytoplasm. The protein localises to the perinuclear region. It carries out the reaction prostaglandin H2 = prostaglandin E2. The catalysed reaction is 2-glyceryl-prostaglandin H2 = 2-glyceryl-prostaglandin E2. It catalyses the reaction prostaglandin G2 = (15S)-15-hydroperoxy-prostaglandin E2. The enzyme catalyses 1-chloro-2,4-dinitrobenzene + glutathione = 2,4-dinitrophenyl-S-glutathione + chloride + H(+). It carries out the reaction (5S)-hydroperoxy-(6E,8Z,11Z,14Z)-eicosatetraenoate + 2 glutathione = (5S)-hydroxy-(6E,8Z,11Z,14Z)-eicosatetraenoate + glutathione disulfide + H2O. The protein operates within lipid metabolism; prostaglandin biosynthesis. Its function is as follows. Terminal enzyme of the cyclooxygenase (COX)-2-mediated prostaglandin E2 (PGE2) biosynthetic pathway. Catalyzes the glutathione-dependent oxidoreduction of prostaglandin endoperoxide H2 (PGH2) to prostaglandin E2 (PGE2) in response to inflammatory stimuli. Plays a key role in inflammation response, fever and pain. Also catalyzes the oxidoreduction of endocannabinoids into prostaglandin glycerol esters and PGG2 into 15-hydroperoxy-PGE2. In addition, displays low glutathione transferase and glutathione-dependent peroxidase activities, toward 1-chloro-2,4-dinitrobenzene and 5-hydroperoxyicosatetraenoic acid (5-HPETE), respectively. In Canis lupus familiaris (Dog), this protein is Prostaglandin E synthase (PTGES).